A 250-amino-acid chain; its full sequence is Uracil-DNA glycosylase (250 aa).

Asp-78 (proton acceptor) is an active-site residue. The interval 228–250 is disordered; it reads RGQKPVDWSGEQNNASRQGEFAL.

The protein belongs to the uracil-DNA glycosylase (UDG) superfamily. UNG family.

Its subcellular location is the cytoplasm. It catalyses the reaction Hydrolyzes single-stranded DNA or mismatched double-stranded DNA and polynucleotides, releasing free uracil.. Functionally, excises uracil residues from the DNA which can arise as a result of misincorporation of dUMP residues by DNA polymerase or due to deamination of cytosine. The chain is Uracil-DNA glycosylase from Bordetella parapertussis (strain 12822 / ATCC BAA-587 / NCTC 13253).